The following is a 283-amino-acid chain: Protein boule-like (283 aa).

The interval 1-25 (MQTDSLSPSPNPVSPVPLNNPTSAP) is disordered. Residues 33-110 (NRIFVGGIDF…KKLNIGPAIR (78 aa)) enclose the RRM domain. A DAZ domain is found at 160–184 (PSRSVCSSPVMVAQPIYQQPAYHYQ).

The protein belongs to the RRM DAZ family. Interacts with DAZ1 and DAZL.

The protein resides in the cytoplasm. Functionally, probable RNA-binding protein, which may be required during spermatogenesis. May act by binding to the 3'-UTR of mRNAs and regulating their translation. In Macaca fascicularis (Crab-eating macaque), this protein is Protein boule-like (BOLL).